The chain runs to 194 residues: 5'-deoxynucleotidase VP0926 (194 aa).

Substrate contacts are provided by residues 18–19 and His33; that span reads RW. The HD domain occupies 30–142; the sequence is VSEHSLQVAF…VKQADSICAY (113 aa). A divalent metal cation-binding residues include His33, His68, and Asp69. Substrate-binding positions include Asp69, 77-80, and Asp137; that span reads DLPT. Asp137 serves as a coordination point for a divalent metal cation.

It belongs to the 5DNU family. In terms of assembly, homodimer. Requires a divalent metal cation as cofactor.

It localises to the cytoplasm. The catalysed reaction is a 2'-deoxyribonucleoside 5'-phosphate + H2O = a 2'-deoxyribonucleoside + phosphate. Catalyzes the strictly specific dephosphorylation of 2'-deoxyribonucleoside 5'-monophosphates. This chain is 5'-deoxynucleotidase VP0926, found in Vibrio parahaemolyticus serotype O3:K6 (strain RIMD 2210633).